A 456-amino-acid chain; its full sequence is Imidazolonepropionase (456 aa).

Fe(3+) contacts are provided by H104 and H106. The Zn(2+) site is built by H104 and H106. Positions 113, 176, and 209 each coordinate 4-imidazolone-5-propanoate. Y176 contacts N-formimidoyl-L-glutamate. H274 lines the Fe(3+) pocket. Position 274 (H274) interacts with Zn(2+). Residue Q277 participates in 4-imidazolone-5-propanoate binding. Fe(3+) is bound at residue D349. D349 lines the Zn(2+) pocket. N-formimidoyl-L-glutamate is bound by residues N351 and G353. S354 contributes to the 4-imidazolone-5-propanoate binding site.

The protein belongs to the metallo-dependent hydrolases superfamily. HutI family. The cofactor is Zn(2+). Requires Fe(3+) as cofactor.

It localises to the cytoplasm. It catalyses the reaction 4-imidazolone-5-propanoate + H2O = N-formimidoyl-L-glutamate. Its pathway is amino-acid degradation; L-histidine degradation into L-glutamate; N-formimidoyl-L-glutamate from L-histidine: step 3/3. Catalyzes the hydrolytic cleavage of the carbon-nitrogen bond in imidazolone-5-propanoate to yield N-formimidoyl-L-glutamate. It is the third step in the universal histidine degradation pathway. This is Imidazolonepropionase from Verminephrobacter eiseniae (strain EF01-2).